The primary structure comprises 596 residues: Ran GTPase-activating protein (596 aa).

LRR repeat units lie at residues 44-71, 107-134, 137-164, 203-230, 231-258, and 259-286; these read QTTVHYLNLDGNTLGVEAAKAIGEGLKR, GAKLTVLDLSDNALGPNGMRGLEELLRS, CYSLQELLLCNCGLGPEGGSMLSRALID, LKTFEEIVLEQNSIYIEGVEALAESFKH, NPHLRVLNMNDNTLKSEGAEKIAEALPF, and LPLLREMSFGDCLIKTNGAYHFGEALER. Residues 355 to 418 are disordered; the sequence is HQEEEDLEDE…EYSNVAEETA (64 aa). The segment covering 387-410 has biased composition (acidic residues); that stretch reads TTEEADEDSEGDEDDEEDEGDEEY. Residues threonine 433 and threonine 434 each carry the phosphothreonine modification. Residue serine 436 is modified to Phosphoserine.

Belongs to the RNA1 family. In terms of assembly, forms a complex with Nup358/RanBP2, sbr/Nxf1 and Nxt1. Associates with the nuclear pore complex via its interaction with Nup358/RanBP2. In terms of tissue distribution, both full-length and truncated protein are expressed in testis (at protein level). Expressed in oocytes and nurse cells (at protein level).

It localises to the cytoplasm. Its subcellular location is the nucleus membrane. GTPase activator for the nuclear Ras-related regulatory protein Ran, converting it to the putatively inactive GDP-bound state. Trans-acting factor necessary for meiotic distortion. Distortion is only seen in individuals that carry the RanGAP tandem duplication and express a RanGAP truncated protein. Binding of truncated RanGAP product to the Responder(RSP) locus initiates events that lead to sperm dysfunction. During oogenesis, plays a role in the biogenesis of annulate lamellae containing nuclear pore complex components. This chain is Ran GTPase-activating protein (RanGAP), found in Drosophila melanogaster (Fruit fly).